We begin with the raw amino-acid sequence, 578 residues long: GTP diphosphokinase CRSH3, chloroplastic (578 aa).

Residues 1–45 constitute a chloroplast transit peptide; sequence MANAGVNETVAVAVAIDAPGVGHDHGAAGEVRRPSTRRLAPAGSG. The 101-residue stretch at 99-199 folds into the HD domain; sequence SVSRALVVAA…LELAVKLDAM (101 aa). 2 EF-hand domains span residues 468–503 and 506–537; these read ATAG…LGAG and DAEE…VKLK. Positions 481, 483, 485, 487, 492, 515, 517, 519, 521, and 526 each coordinate Ca(2+).

It belongs to the RelA/SpoT family. In terms of tissue distribution, expressed in roots and shoots.

It is found in the plastid. The protein localises to the chloroplast. It catalyses the reaction GTP + ATP = guanosine 3'-diphosphate 5'-triphosphate + AMP. Activated by calcium. Functionally, possesses calcium-dependent ppGpp (guanosine 3'-diphosphate 5'-diphosphate) synthetase activity in vitro and is able to functionally complement E.coli relA mutants. May be involved in a rapid plant ppGpp-mediated response to pathogens and other stresses. The chain is GTP diphosphokinase CRSH3, chloroplastic from Oryza sativa subsp. japonica (Rice).